The following is a 553-amino-acid chain: Hydroxylamine reductase (553 aa).

Residues cysteine 3, cysteine 6, cysteine 18, and cysteine 25 each contribute to the [2Fe-2S] cluster site. Residues histidine 249, glutamate 273, cysteine 317, cysteine 405, cysteine 433, cysteine 459, glutamate 493, and lysine 495 each contribute to the hybrid [4Fe-2O-2S] cluster site. The residue at position 405 (cysteine 405) is a Cysteine persulfide.

The protein belongs to the HCP family. [2Fe-2S] cluster serves as cofactor. It depends on hybrid [4Fe-2O-2S] cluster as a cofactor.

It localises to the cytoplasm. It catalyses the reaction A + NH4(+) + H2O = hydroxylamine + AH2 + H(+). Its function is as follows. Catalyzes the reduction of hydroxylamine to form NH(3) and H(2)O. The polypeptide is Hydroxylamine reductase (Actinobacillus succinogenes (strain ATCC 55618 / DSM 22257 / CCUG 43843 / 130Z)).